We begin with the raw amino-acid sequence, 672 residues long: DNA ligase (672 aa).

NAD(+) is bound by residues 32 to 36, 81 to 82, and Glu-113; these read DAEYD and SL. The N6-AMP-lysine intermediate role is filled by Lys-115. Positions 136, 173, 290, and 314 each coordinate NAD(+). Residues Cys-408, Cys-411, Cys-426, and Cys-432 each coordinate Zn(2+). One can recognise a BRCT domain in the interval 592-672; that stretch reads EIDSPFAGKT…EMIRLLGESS (81 aa).

It belongs to the NAD-dependent DNA ligase family. LigA subfamily. The cofactor is Mg(2+). It depends on Mn(2+) as a cofactor.

The enzyme catalyses NAD(+) + (deoxyribonucleotide)n-3'-hydroxyl + 5'-phospho-(deoxyribonucleotide)m = (deoxyribonucleotide)n+m + AMP + beta-nicotinamide D-nucleotide.. Functionally, DNA ligase that catalyzes the formation of phosphodiester linkages between 5'-phosphoryl and 3'-hydroxyl groups in double-stranded DNA using NAD as a coenzyme and as the energy source for the reaction. It is essential for DNA replication and repair of damaged DNA. This Yersinia enterocolitica serotype O:8 / biotype 1B (strain NCTC 13174 / 8081) protein is DNA ligase.